A 159-amino-acid polypeptide reads, in one-letter code: 2-C-methyl-D-erythritol 2,4-cyclodiphosphate synthase (159 aa).

Residues Asp-11 and His-13 each contribute to the a divalent metal cation site. 4-CDP-2-C-methyl-D-erythritol 2-phosphate-binding positions include 11-13 (DVH) and 37-38 (HS). Position 45 (His-45) interacts with a divalent metal cation. 4-CDP-2-C-methyl-D-erythritol 2-phosphate-binding positions include 59–61 (DIG) and 64–68 (FPDSD).

The protein belongs to the IspF family. Homotrimer. The cofactor is a divalent metal cation.

It carries out the reaction 4-CDP-2-C-methyl-D-erythritol 2-phosphate = 2-C-methyl-D-erythritol 2,4-cyclic diphosphate + CMP. It functions in the pathway isoprenoid biosynthesis; isopentenyl diphosphate biosynthesis via DXP pathway; isopentenyl diphosphate from 1-deoxy-D-xylulose 5-phosphate: step 4/6. Its function is as follows. Involved in the biosynthesis of isopentenyl diphosphate (IPP) and dimethylallyl diphosphate (DMAPP), two major building blocks of isoprenoid compounds. Catalyzes the conversion of 4-diphosphocytidyl-2-C-methyl-D-erythritol 2-phosphate (CDP-ME2P) to 2-C-methyl-D-erythritol 2,4-cyclodiphosphate (ME-CPP) with a corresponding release of cytidine 5-monophosphate (CMP). The chain is 2-C-methyl-D-erythritol 2,4-cyclodiphosphate synthase from Solibacter usitatus (strain Ellin6076).